The chain runs to 423 residues: Diaminobutyrate--2-oxoglutarate transaminase (423 aa).

Lys267 is subject to N6-(pyridoxal phosphate)lysine.

The protein belongs to the class-III pyridoxal-phosphate-dependent aminotransferase family. As to quaternary structure, homohexamer. Requires pyridoxal 5'-phosphate as cofactor.

It carries out the reaction L-2,4-diaminobutanoate + 2-oxoglutarate = L-aspartate 4-semialdehyde + L-glutamate. The protein operates within amine and polyamine biosynthesis; ectoine biosynthesis; L-ectoine from L-aspartate 4-semialdehyde: step 1/3. Catalyzes reversively the conversion of L-aspartate beta-semialdehyde (ASA) to L-2,4-diaminobutyrate (DABA) by transamination with L-glutamate. The sequence is that of Diaminobutyrate--2-oxoglutarate transaminase (ectB) from Chromohalobacter salexigens (strain ATCC BAA-138 / DSM 3043 / CIP 106854 / NCIMB 13768 / 1H11).